The chain runs to 236 residues: WUSCHEL-related homeobox 4 (236 aa).

The segment at residues 88–152 (AGTTRWNPSA…NHKARERQKQ (65 aa)) is a DNA-binding region (homeobox; WUS-type). Positions 169–188 (PATANETKEAPEKKEKDVED) are disordered. Over residues 174–187 (ETKEAPEKKEKDVE) the composition is skewed to basic and acidic residues.

Belongs to the WUS homeobox family.

It is found in the nucleus. Its function is as follows. Transcription factor which may be involved in developmental processes. This Oryza sativa subsp. indica (Rice) protein is WUSCHEL-related homeobox 4 (WOX4).